The sequence spans 407 residues: Phosphopentomutase (407 aa).

Mn(2+) is bound by residues Asp10, Asp306, His311, Asp347, His348, and His359.

This sequence belongs to the phosphopentomutase family. Mn(2+) is required as a cofactor.

Its subcellular location is the cytoplasm. It carries out the reaction 2-deoxy-alpha-D-ribose 1-phosphate = 2-deoxy-D-ribose 5-phosphate. The catalysed reaction is alpha-D-ribose 1-phosphate = D-ribose 5-phosphate. It functions in the pathway carbohydrate degradation; 2-deoxy-D-ribose 1-phosphate degradation; D-glyceraldehyde 3-phosphate and acetaldehyde from 2-deoxy-alpha-D-ribose 1-phosphate: step 1/2. Functionally, isomerase that catalyzes the conversion of deoxy-ribose 1-phosphate (dRib-1-P) and ribose 1-phosphate (Rib-1-P) to deoxy-ribose 5-phosphate (dRib-5-P) and ribose 5-phosphate (Rib-5-P), respectively. In Salmonella paratyphi A (strain AKU_12601), this protein is Phosphopentomutase.